Here is a 143-residue protein sequence, read N- to C-terminus: Putative cytokinin riboside 5'-monophosphate phosphoribohydrolase LOG9 (143 aa).

Substrate is bound by residues 23 to 24, 41 to 47, and Thr-53; these read RK and RYETMEE.

It belongs to the LOG family.

It carries out the reaction N(6)-(dimethylallyl)adenosine 5'-phosphate + H2O = N(6)-dimethylallyladenine + D-ribose 5-phosphate. The catalysed reaction is 9-ribosyl-trans-zeatin 5'-phosphate + H2O = trans-zeatin + D-ribose 5-phosphate. Its function is as follows. Cytokinin-activating enzyme working in the direct activation pathway. Phosphoribohydrolase that converts inactive cytokinin nucleotides to the biologically active free-base forms. The sequence is that of Putative cytokinin riboside 5'-monophosphate phosphoribohydrolase LOG9 (LOG9) from Arabidopsis thaliana (Mouse-ear cress).